Here is a 683-residue protein sequence, read N- to C-terminus: Patellin-2 (683 aa).

Residues Met1–Pro23 form a disordered region. N-acetylalanine is present on Ala2. A Phosphoserine modification is found at Ser79. Residues Leu86–Ala163 adopt a coiled-coil conformation. The segment at Lys111 to Thr279 is disordered. Residues Val124–Ser161 are compositionally biased toward basic and acidic residues. Residues Pro232 to Thr243 are compositionally biased toward low complexity. Residues Glu244 to Ala275 show a composition bias toward basic and acidic residues. A Glycyl lysine isopeptide (Lys-Gly) (interchain with G-Cter in ubiquitin) cross-link involves residue Lys394. The CRAL-TRIO domain maps to Glu404–Pro576. The GOLD domain occupies Glu580–Thr681.

Belongs to the patellin family. Interacts with the deubiquitinating enzyme AMSH3.

Its subcellular location is the membrane. It localises to the cytoplasm. Its function is as follows. Carrier protein that may be involved in membrane-trafficking events associated with cell plate formation during cytokinesis. Binds to some hydrophobic molecules such as phosphoinositides and promotes their transfer between the different cellular sites. This is Patellin-2 (PATL2) from Arabidopsis thaliana (Mouse-ear cress).